Reading from the N-terminus, the 207-residue chain is MSCTIEKILTDAKTLLERLREHDAAAESLVDQSAALHRRVAAMREAGAVLPEQYQEDASDVKDMSKYKPHILLSQENTQIRDLQQENRELWVSLEEHQDALELIMSKYRKQMLQLMVAKKAVDAEPVLKAHQSHSAEIESQIDRICEMGAVMRRAVQVDDNQFCKVQERLAQLELENKELRELLSISSESLQVGKESSVAPASQTIK.

Coiled-coil stretches lie at residues 70 to 102 and 164 to 192; these read HILL…DALE and CKVQ…ESLQ.

It belongs to the SIKE family. Interacts with IKBKE and TBK1 via its coiled coil region. Interaction with TBK1 is disrupted upon viral infection or TLR3 stimulation. Interacts with CDC42BPB. Interacts with SIKE1 which mediates association with the STRIPAK core complex composed of PP2A catalytic and scaffolding subunits, the striatins (PP2A regulatory subunits), the striatin-associated proteins MOB4, STRIP1 and STRIP2, PDCD10 and members of the STE20 kinases, such as STK24 and STK26.

The protein localises to the cytoplasm. In terms of biological role, physiological suppressor of IKK-epsilon and TBK1 that plays an inhibitory role in virus- and TLR3-triggered IRF3. Inhibits TLR3-mediated activation of interferon-stimulated response elements (ISRE) and the IFN-beta promoter. May act by disrupting the interactions of IKBKE or TBK1 with TICAM1/TRIF, IRF3 and RIGI. Does not inhibit NF-kappa-B activation pathways. Associates with the striatin-interacting phosphatase and kinase (STRIPAK) core complex, forming the extended (SIKE1:SLMAP)STRIPAK complex. The (SIKE1:SLMAP)STRIPAK complex dephosphorylates STK3 leading to the inhibition of Hippo signaling and the control of cell growth. This is Suppressor of IKBKE 1 (Sike1) from Mus musculus (Mouse).